Here is a 516-residue protein sequence, read N- to C-terminus: High-affinity nitrate transporter 2.3 (516 aa).

12 consecutive transmembrane segments (helical) span residues 52–72 (WFSF…LPLI), 76–96 (LGLT…GAVF), 112–132 (LASA…SIIQ), 142–162 (FFTG…SSMF), 172–192 (GVAG…MPLV), 209–229 (IAFF…LAFG), 265–285 (WILA…DNVV), 299–319 (TAGL…PGGG), 335–354 (LWGL…VLGI), 367–387 (VLFS…VPFV), 395–415 (ISGM…YIFF), and 425–445 (GIKY…LIYF). The disordered stretch occupies residues 489–516 (SVREGGRSSANGGQPRHTVPVDASPAGV).

It belongs to the major facilitator superfamily. Nitrate/nitrite porter (TC 2.A.1.8) family. In terms of assembly, heterotetramer composed of two NRT2.3 and two NAR2.1. Isoform 1 interacts with NAR2.1, but not isoform 2. In terms of tissue distribution, expressed in the stelar cells of both primary and lateral roots, particularly at the site of lateral root emergence, root-shoot junction zone, vascular tissues of adventitious root primordia, leaves, germ tips and seed scutellum.

The protein resides in the cell membrane. Involved in nitrate transport, but does not seem to be able to mediate transport by its own. Acts as a dual component transporter with NAR2.1. Imports nitrate with high affinity when expressed with NAR2.1 in a heterologous system (Xenopus oocytes). Plays a key role in long-distance nitrate transport from root to shoot particularly at low external nitrate supply. The polypeptide is High-affinity nitrate transporter 2.3 (NRT2.3) (Oryza sativa subsp. japonica (Rice)).